Reading from the N-terminus, the 156-residue chain is Ribosome maturation factor RimP (156 aa).

It belongs to the RimP family.

The protein resides in the cytoplasm. Its function is as follows. Required for maturation of 30S ribosomal subunits. This is Ribosome maturation factor RimP from Oenococcus oeni (strain ATCC BAA-331 / PSU-1).